Consider the following 550-residue polypeptide: Dihydroxy-acid dehydratase (550 aa).

Residue Asp78 participates in Mg(2+) binding. Residue Cys119 participates in [2Fe-2S] cluster binding. Positions 120 and 121 each coordinate Mg(2+). Residue Lys121 is modified to N6-carboxylysine. Cys191 provides a ligand contact to [2Fe-2S] cluster. Mg(2+) is bound at residue Glu440. The active-site Proton acceptor is the Ser466.

It belongs to the IlvD/Edd family. As to quaternary structure, homodimer. Requires [2Fe-2S] cluster as cofactor. The cofactor is Mg(2+).

The catalysed reaction is (2R)-2,3-dihydroxy-3-methylbutanoate = 3-methyl-2-oxobutanoate + H2O. The enzyme catalyses (2R,3R)-2,3-dihydroxy-3-methylpentanoate = (S)-3-methyl-2-oxopentanoate + H2O. The protein operates within amino-acid biosynthesis; L-isoleucine biosynthesis; L-isoleucine from 2-oxobutanoate: step 3/4. It functions in the pathway amino-acid biosynthesis; L-valine biosynthesis; L-valine from pyruvate: step 3/4. In terms of biological role, functions in the biosynthesis of branched-chain amino acids. Catalyzes the dehydration of (2R,3R)-2,3-dihydroxy-3-methylpentanoate (2,3-dihydroxy-3-methylvalerate) into 2-oxo-3-methylpentanoate (2-oxo-3-methylvalerate) and of (2R)-2,3-dihydroxy-3-methylbutanoate (2,3-dihydroxyisovalerate) into 2-oxo-3-methylbutanoate (2-oxoisovalerate), the penultimate precursor to L-isoleucine and L-valine, respectively. This Methanococcus aeolicus (strain ATCC BAA-1280 / DSM 17508 / OCM 812 / Nankai-3) protein is Dihydroxy-acid dehydratase.